Here is a 963-residue protein sequence, read N- to C-terminus: Probable sucrose-phosphate synthase 2 (963 aa).

The disordered stretch occupies residues 111-150 (KLRTDTNADMSEDLFEGEKGEDAGDPSVAYGDSTTGSSPK).

This sequence belongs to the glycosyltransferase 1 family. Homodimer or homotetramer. As to expression, expressed in germinating seeds.

The catalysed reaction is beta-D-fructose 6-phosphate + UDP-alpha-D-glucose = sucrose 6(F)-phosphate + UDP + H(+). Its pathway is glycan biosynthesis; sucrose biosynthesis; sucrose from D-fructose 6-phosphate and UDP-alpha-D-glucose: step 1/2. Activity is regulated by phosphorylation and moderated by concentration of metabolites and light. Plays a role in photosynthetic sucrose synthesis by catalyzing the rate-limiting step of sucrose biosynthesis from UDP-glucose and fructose- 6-phosphate. Involved in the regulation of carbon partitioning in the leaves of plants. May regulate the synthesis of sucrose and therefore play a major role as a limiting factor in the export of photoassimilates out of the leaf. Plays a role for sucrose availability that is essential for plant growth and fiber elongation. This is Probable sucrose-phosphate synthase 2 (SPS2) from Oryza sativa subsp. japonica (Rice).